Here is a 273-residue protein sequence, read N- to C-terminus: Inositol monophosphatase 1 (273 aa).

Mg(2+)-binding residues include glutamate 71, aspartate 91, valine 93, and aspartate 94. Glutamate 71 is a binding site for substrate. Residues 93-96 (VDGT), 194-196 (GSC), and aspartate 221 contribute to the substrate site. Aspartate 221 contacts Mg(2+).

It belongs to the inositol monophosphatase superfamily. Requires Mg(2+) as cofactor. In terms of tissue distribution, expressed in seedlings, flowers, young and matures green fruits. Detected in roots and stems.

It carries out the reaction a myo-inositol phosphate + H2O = myo-inositol + phosphate. The protein operates within polyol metabolism; myo-inositol biosynthesis; myo-inositol from D-glucose 6-phosphate: step 2/2. Functionally, responsible for the provision of inositol required for synthesis of phosphatidylinositol and polyphosphoinositides. The chain is Inositol monophosphatase 1 (IMP1) from Solanum lycopersicum (Tomato).